The primary structure comprises 91 residues: Large ribosomal subunit protein bL31B (91 aa).

It belongs to the bacterial ribosomal protein bL31 family. Type B subfamily. In terms of assembly, part of the 50S ribosomal subunit.

The protein is Large ribosomal subunit protein bL31B of Neisseria meningitidis serogroup B (strain ATCC BAA-335 / MC58).